The primary structure comprises 305 residues: UPF0282 protein Pisl_0021 (305 aa).

It belongs to the UPF0282 family.

In Pyrobaculum islandicum (strain DSM 4184 / JCM 9189 / GEO3), this protein is UPF0282 protein Pisl_0021.